A 287-amino-acid chain; its full sequence is Oxaloacetate decarboxylase (287 aa).

Substrate is bound at residue S50. D88 is a Mg(2+) binding site. Substrate is bound by residues R159 and H235.

It belongs to the isocitrate lyase/PEP mutase superfamily. Oxaloacetate decarboxylase family. As to quaternary structure, homotetramer; dimer of dimers. It depends on Mg(2+) as a cofactor.

The catalysed reaction is oxaloacetate + H(+) = pyruvate + CO2. In terms of biological role, catalyzes the decarboxylation of oxaloacetate into pyruvate. Seems to play a role in maintaining cellular concentrations of bicarbonate and pyruvate. In Chromohalobacter salexigens (strain ATCC BAA-138 / DSM 3043 / CIP 106854 / NCIMB 13768 / 1H11), this protein is Oxaloacetate decarboxylase.